The primary structure comprises 513 residues: Serine/threonine-protein kinase pakH (513 aa).

The Protein kinase domain occupies 42–294 (FEIQEKLGEG…PSQLLDHPFI (253 aa)). Residues 48-56 (LGEGSFGSV) and Lys71 contribute to the ATP site. The Proton acceptor role is filled by Asp163. The segment at 313 to 358 (KSKKRKSIGPSVSPKQQPNDNNNNNNNNKPQFLSKLLNNNSNSSND) is disordered. Residues 331–357 (NDNNNNNNNNKPQFLSKLLNNNSNSSN) show a composition bias toward low complexity. The chain crosses the membrane as a helical span at residues 493–512 (IVLYSTLGLILVLSVFFKFF).

Belongs to the protein kinase superfamily. STE Ser/Thr protein kinase family. STE20 subfamily. Requires Mg(2+) as cofactor.

The protein resides in the membrane. The catalysed reaction is L-seryl-[protein] + ATP = O-phospho-L-seryl-[protein] + ADP + H(+). The enzyme catalyses L-threonyl-[protein] + ATP = O-phospho-L-threonyl-[protein] + ADP + H(+). The sequence is that of Serine/threonine-protein kinase pakH (pakH-1) from Dictyostelium discoideum (Social amoeba).